Consider the following 89-residue polypeptide: Small ribosomal subunit protein uS15 (89 aa).

The protein belongs to the universal ribosomal protein uS15 family. As to quaternary structure, part of the 30S ribosomal subunit. Forms a bridge to the 50S subunit in the 70S ribosome, contacting the 23S rRNA.

Functionally, one of the primary rRNA binding proteins, it binds directly to 16S rRNA where it helps nucleate assembly of the platform of the 30S subunit by binding and bridging several RNA helices of the 16S rRNA. In terms of biological role, forms an intersubunit bridge (bridge B4) with the 23S rRNA of the 50S subunit in the ribosome. This Vibrio vulnificus (strain YJ016) protein is Small ribosomal subunit protein uS15.